We begin with the raw amino-acid sequence, 332 residues long: Acetyl-coenzyme A carboxylase carboxyl transferase subunit alpha (332 aa).

In terms of domain architecture, CoA carboxyltransferase C-terminal spans 44 to 298; the sequence is QLESRAQNLR…KETLVNNLEE (255 aa).

Belongs to the AccA family. As to quaternary structure, acetyl-CoA carboxylase is a heterohexamer composed of biotin carboxyl carrier protein (AccB), biotin carboxylase (AccC) and two subunits each of ACCase subunit alpha (AccA) and ACCase subunit beta (AccD).

It is found in the cytoplasm. It catalyses the reaction N(6)-carboxybiotinyl-L-lysyl-[protein] + acetyl-CoA = N(6)-biotinyl-L-lysyl-[protein] + malonyl-CoA. It participates in lipid metabolism; malonyl-CoA biosynthesis; malonyl-CoA from acetyl-CoA: step 1/1. Functionally, component of the acetyl coenzyme A carboxylase (ACC) complex. First, biotin carboxylase catalyzes the carboxylation of biotin on its carrier protein (BCCP) and then the CO(2) group is transferred by the carboxyltransferase to acetyl-CoA to form malonyl-CoA. This is Acetyl-coenzyme A carboxylase carboxyl transferase subunit alpha from Crocosphaera subtropica (strain ATCC 51142 / BH68) (Cyanothece sp. (strain ATCC 51142)).